A 298-amino-acid chain; its full sequence is 4-diphosphocytidyl-2-C-methyl-D-erythritol kinase (298 aa).

Residue K19 is part of the active site. 106 to 116 is an ATP binding site; that stretch reads PVASGIGGGSA. Residue D148 is part of the active site.

This sequence belongs to the GHMP kinase family. IspE subfamily.

It catalyses the reaction 4-CDP-2-C-methyl-D-erythritol + ATP = 4-CDP-2-C-methyl-D-erythritol 2-phosphate + ADP + H(+). It participates in isoprenoid biosynthesis; isopentenyl diphosphate biosynthesis via DXP pathway; isopentenyl diphosphate from 1-deoxy-D-xylulose 5-phosphate: step 3/6. In terms of biological role, catalyzes the phosphorylation of the position 2 hydroxy group of 4-diphosphocytidyl-2C-methyl-D-erythritol. In Rhizobium leguminosarum bv. trifolii (strain WSM2304), this protein is 4-diphosphocytidyl-2-C-methyl-D-erythritol kinase.